The chain runs to 228 residues: LexA repressor (228 aa).

The H-T-H motif DNA-binding region spans 26–46 (FDEMKDALDLRSKSGIHRLIT). Residues S149 and K187 each act as for autocatalytic cleavage activity in the active site.

Belongs to the peptidase S24 family. As to quaternary structure, homodimer.

It catalyses the reaction Hydrolysis of Ala-|-Gly bond in repressor LexA.. Its function is as follows. Represses a number of genes involved in the response to DNA damage (SOS response), including recA and lexA. In the presence of single-stranded DNA, RecA interacts with LexA causing an autocatalytic cleavage which disrupts the DNA-binding part of LexA, leading to derepression of the SOS regulon and eventually DNA repair. The protein is LexA repressor of Cereibacter sphaeroides (strain ATCC 17025 / ATH 2.4.3) (Rhodobacter sphaeroides).